The sequence spans 173 residues: Zinc resistance-associated protein homolog (173 aa).

A signal peptide spans 1 to 28 (MNSKRIALGIIALATVVSLGTAANNAFA).

It belongs to the ZraP family.

This Nitratidesulfovibrio vulgaris (strain ATCC 29579 / DSM 644 / CCUG 34227 / NCIMB 8303 / VKM B-1760 / Hildenborough) (Desulfovibrio vulgaris) protein is Zinc resistance-associated protein homolog.